A 150-amino-acid chain; its full sequence is C-type lectin 16 (150 aa).

Positions 1–27 (MKRVRVKVIFVSFGLLVVFLSLSGTAA) are cleaved as a signal peptide. Cystine bridges form between C29–C40, C57–C146, and C123–C138. Residues 36–147 (YEGHCYKPFN…CRMLARFVCE (112 aa)) enclose the C-type lectin domain.

The protein belongs to the snaclec family. As to quaternary structure, heteromultimer; disulfide-linked. In terms of tissue distribution, expressed by the venom gland.

It localises to the secreted. Functionally, interferes with one step of hemostasis (modulation of platelet aggregation, or coagulation cascade, for example). The polypeptide is C-type lectin 16 (Crotalus adamanteus (Eastern diamondback rattlesnake)).